Reading from the N-terminus, the 289-residue chain is Phosphatidylglycerol--prolipoprotein diacylglyceryl transferase (289 aa).

Transmembrane regions (helical) follow at residues 23-43 (ALHWYGLMYLVGFVFAMWLAV), 61-81 (LLYMGFLGVFVGGRLGYVLFY), 99-119 (GGMSFHGGLMGVICVMLWFAH), 125-145 (FFQVADFIAPLIPFGLGAGRL), 199-219 (SQLYQMMLEGVALFIILNLFI), 226-246 (GSVSGLFLICYGMFRIITEFF), and 259-279 (LFSMGQILSLPMVLAGILMMV). Arg144 is a binding site for a 1,2-diacyl-sn-glycero-3-phospho-(1'-sn-glycerol).

The protein belongs to the Lgt family.

It is found in the cell inner membrane. It catalyses the reaction L-cysteinyl-[prolipoprotein] + a 1,2-diacyl-sn-glycero-3-phospho-(1'-sn-glycerol) = an S-1,2-diacyl-sn-glyceryl-L-cysteinyl-[prolipoprotein] + sn-glycerol 1-phosphate + H(+). Its pathway is protein modification; lipoprotein biosynthesis (diacylglyceryl transfer). In terms of biological role, catalyzes the transfer of the diacylglyceryl group from phosphatidylglycerol to the sulfhydryl group of the N-terminal cysteine of a prolipoprotein, the first step in the formation of mature lipoproteins. This Pectobacterium atrosepticum (strain SCRI 1043 / ATCC BAA-672) (Erwinia carotovora subsp. atroseptica) protein is Phosphatidylglycerol--prolipoprotein diacylglyceryl transferase.